A 245-amino-acid chain; its full sequence is Ribosomal RNA small subunit methyltransferase G (245 aa).

S-adenosyl-L-methionine is bound by residues Gly90, Leu95, 140-141 (AE), and Arg158. A disordered region spans residues 223–245 (VVSARRAKPPHPKSARTGKAGTR). Residues 227–245 (RRAKPPHPKSARTGKAGTR) are compositionally biased toward basic residues.

Belongs to the methyltransferase superfamily. RNA methyltransferase RsmG family.

Its subcellular location is the cytoplasm. Functionally, specifically methylates the N7 position of guanine in position 518 of 16S rRNA. The protein is Ribosomal RNA small subunit methyltransferase G of Mycobacterium avium (strain 104).